A 426-amino-acid polypeptide reads, in one-letter code: Pregnancy-specific beta-1-glycoprotein 9 (426 aa).

A signal peptide spans Met-1 to Ala-34. Residues Glu-35 to Leu-144 enclose the Ig-like V-type domain. N-linked (GlcNAc...) asparagine glycans are attached at residues Asn-104 and Asn-111. The short motif at Arg-127–Asp-129 is the Cell attachment site element. Ig-like C2-type domains follow at residues Pro-147 to Asn-234, Pro-242 to Leu-326, and Pro-335 to Thr-410. Cystine bridges form between Cys-169–Cys-217, Cys-262–Cys-310, and Cys-354–Cys-394. N-linked (GlcNAc...) asparagine glycans are attached at residues Asn-199, Asn-268, Asn-303, and Asn-387.

The protein belongs to the immunoglobulin superfamily. CEA family. In terms of assembly, interacts with latency-associated peptide; leading to TGFB1 activation.

It is found in the secreted. Functionally, binds to the small latent transforming growth factor-beta complex, consisting of the N-terminal TGFB1 latency-associated peptide (LAP) and the mature form of TGFB1, thereby leading to the activation of TGFB1. The activation of TGFB1 leads to stimulation of naive CD4(+) T-cells to increase FoxP3 expression and to an increase in the number of FoxP3(+) regulatory T-cells. Induces the differentiation of a suppressive CD4(+)LAP(+)FoxP3(-) T-cell subset. Induces the secretion of TGFB1 in macrophages, but not in activated CD4(+) T-cells. May reduce the expression of several pro-inflammatory cytokines and chemokines by CD4(+) T-cells, including IL2 and IL6. This is Pregnancy-specific beta-1-glycoprotein 9 (PSG9) from Homo sapiens (Human).